The primary structure comprises 307 residues: UAP56-interacting factor (307 aa).

Residues 1-25 are compositionally biased toward low complexity; sequence MSGFGAAALLSGSSAAAGTRSGSSD. Disordered regions lie at residues 1 to 28 and 41 to 85; these read MSGF…DSLE and NKKE…KNHL. A UAP56-binding motif motif is present at residues 26–44; the sequence is SLEKIDMSLDDIIKLNKKE. A compositionally biased stretch (polar residues) spans 57-78; that stretch reads LQQNRTQQFRTPGSKWGIQQQK.

It belongs to the UIF family. In terms of tissue distribution, widely expressed.

The protein resides in the nucleus. It localises to the nucleoplasm. The protein localises to the nucleus speckle. Its function is as follows. Required for mRNA export from the nucleus to the cytoplasm. Acts as an adapter that uses the DDX39B/UAP56-NFX1 pathway to ensure efficient mRNA export and delivering to the nuclear pore. The chain is UAP56-interacting factor (FYTTD1) from Gallus gallus (Chicken).